The sequence spans 161 residues: MSQLTHINAAGEAHMVDVSAKAETVREARAEAFVTMRSETLAMIIDGRHHKGDVFATARIAGIQAAKRTWDLIPLCHPLMLSKVEVNLQAEPEHNRVRIETLCRLTGKTGVEMEALTAASVAALTIYDMCKAVQKDMVIGPVRLLAKSGGKSGDFKVEADD.

Substrate contacts are provided by residues 75–77 and 113–114; these read LCH and ME. D128 is a catalytic residue.

Belongs to the MoaC family. In terms of assembly, homohexamer; trimer of dimers.

It carries out the reaction (8S)-3',8-cyclo-7,8-dihydroguanosine 5'-triphosphate = cyclic pyranopterin phosphate + diphosphate. It functions in the pathway cofactor biosynthesis; molybdopterin biosynthesis. Functionally, catalyzes the conversion of (8S)-3',8-cyclo-7,8-dihydroguanosine 5'-triphosphate to cyclic pyranopterin monophosphate (cPMP). The protein is Cyclic pyranopterin monophosphate synthase of Escherichia coli O139:H28 (strain E24377A / ETEC).